We begin with the raw amino-acid sequence, 250 residues long: 2,5-dichloro-2,5-cyclohexadiene-1,4-diol dehydrogenase LinX (250 aa).

Residues D38, D64, V65, Y156, K160, T191, and T194 each contribute to the NAD(+) site. The active-site Proton acceptor is the Y156.

It belongs to the short-chain dehydrogenases/reductases (SDR) family.

It catalyses the reaction 2,5-dichlorocyclohexa-2,5-dien-1,4-diol + NAD(+) = 2,5-dichlorohydroquinone + NADH + H(+). Its function is as follows. Catalyzes the degradation of 2,5-dichloro-2,5-cyclohexadiene-1,4-diol (2,5-DDOL) into 2,5-dichlorohydroquinone (2,5-DCHQ) in vitro. LinX appears not to be involved in gamma-hexachlorocyclohexane (gamma-HCH) degradation pathway, in contrast to LinC which has the same enzymatic activity. In Sphingobium indicum (strain DSM 16412 / CCM 7286 / MTCC 6364 / B90A), this protein is 2,5-dichloro-2,5-cyclohexadiene-1,4-diol dehydrogenase LinX.